A 318-amino-acid chain; its full sequence is NADH-ubiquinone oxidoreductase chain 1 (318 aa).

8 consecutive transmembrane segments (helical) span residues 3–23 (LINLLAMIIPVLLAVAFLTLL), 69–89 (MLFIIAPTLALTLALTMWTPL), 102–122 (MLFILALSSLAVYTIMWSGWA), 144–164 (VTLAIIILSLLLMNGSFTLLS), 171–191 (YIWLLIPSWPLAMMWFISTLA), 222–242 (LFFLAEYANIIMMNALTIILF), 253–273 (ELYTINFTTKTLLFTAFFLWI), and 294–314 (LPLTLVMCMWHVALPIMLAGI).

It belongs to the complex I subunit 1 family. In terms of assembly, core subunit of respiratory chain NADH dehydrogenase (Complex I) which is composed of 45 different subunits.

The protein localises to the mitochondrion inner membrane. It carries out the reaction a ubiquinone + NADH + 5 H(+)(in) = a ubiquinol + NAD(+) + 4 H(+)(out). Functionally, core subunit of the mitochondrial membrane respiratory chain NADH dehydrogenase (Complex I) which catalyzes electron transfer from NADH through the respiratory chain, using ubiquinone as an electron acceptor. Essential for the catalytic activity and assembly of complex I. The sequence is that of NADH-ubiquinone oxidoreductase chain 1 (MT-ND1) from Murina florium (Flores tube-nosed bat).